The chain runs to 172 residues: Nicotinamide-nucleotide adenylyltransferase (172 aa).

This sequence belongs to the archaeal NMN adenylyltransferase family.

The protein resides in the cytoplasm. It carries out the reaction beta-nicotinamide D-ribonucleotide + ATP + H(+) = diphosphate + NAD(+). Its pathway is cofactor biosynthesis; NAD(+) biosynthesis; NAD(+) from nicotinamide D-ribonucleotide: step 1/1. The chain is Nicotinamide-nucleotide adenylyltransferase from Aeropyrum pernix (strain ATCC 700893 / DSM 11879 / JCM 9820 / NBRC 100138 / K1).